A 181-amino-acid chain; its full sequence is ATP-dependent protease subunit HslV (181 aa).

Threonine 5 is an active-site residue. Na(+)-binding residues include serine 162, cysteine 165, and threonine 168.

This sequence belongs to the peptidase T1B family. HslV subfamily. As to quaternary structure, a double ring-shaped homohexamer of HslV is capped on each side by a ring-shaped HslU homohexamer. The assembly of the HslU/HslV complex is dependent on binding of ATP.

The protein localises to the cytoplasm. It catalyses the reaction ATP-dependent cleavage of peptide bonds with broad specificity.. With respect to regulation, allosterically activated by HslU binding. Protease subunit of a proteasome-like degradation complex believed to be a general protein degrading machinery. The protein is ATP-dependent protease subunit HslV of Campylobacter hominis (strain ATCC BAA-381 / DSM 21671 / CCUG 45161 / LMG 19568 / NCTC 13146 / CH001A).